Consider the following 225-residue polypeptide: uncharacterized protein (225 aa).

A helical membrane pass occupies residues 2 to 22; sequence TIFYLVFIAVIIIIILYVLYL. Asparagine 73 carries an N-linked (GlcNAc...) asparagine; by host glycan. Positions 114-146 form a coiled coil; that stretch reads DYEDNYFNSNWNLKQLKNQLENLLREKNYKMVL. N-linked (GlcNAc...) asparagine; by host glycosylation is present at asparagine 222.

It localises to the membrane. This is an uncharacterized protein from Acanthamoeba polyphaga (Amoeba).